A 338-amino-acid polypeptide reads, in one-letter code: D-erythrose-4-phosphate dehydrogenase (338 aa).

12–13 contributes to the NAD(+) binding site; that stretch reads RI. Substrate is bound by residues 154-156, Arg-200, 213-214, and Arg-236; these read SCT and TK. Cys-155 serves as the catalytic Nucleophile. Asn-318 contacts NAD(+).

Belongs to the glyceraldehyde-3-phosphate dehydrogenase family. Epd subfamily. In terms of assembly, homotetramer.

Its subcellular location is the cytoplasm. The catalysed reaction is D-erythrose 4-phosphate + NAD(+) + H2O = 4-phospho-D-erythronate + NADH + 2 H(+). Its pathway is cofactor biosynthesis; pyridoxine 5'-phosphate biosynthesis; pyridoxine 5'-phosphate from D-erythrose 4-phosphate: step 1/5. Its function is as follows. Catalyzes the NAD-dependent conversion of D-erythrose 4-phosphate to 4-phosphoerythronate. The protein is D-erythrose-4-phosphate dehydrogenase of Pectobacterium carotovorum subsp. carotovorum (strain PC1).